We begin with the raw amino-acid sequence, 207 residues long: Fibroblast growth factor 18 (207 aa).

Residues 1–27 (MYSAPSTCTCLCLHFLLLCFQVQVLAA) form the signal peptide. N-linked (GlcNAc...) asparagine glycosylation is present at Asn39. The cysteines at positions 109 and 127 are disulfide-linked. An N-linked (GlcNAc...) asparagine glycan is attached at Asn137.

It belongs to the heparin-binding growth factors family. In terms of assembly, interacts with FGFR3 and FGFR4.

The protein localises to the secreted. In terms of biological role, plays an important role in the regulation of cell proliferation, cell differentiation and cell migration. Required for normal ossification and bone development. Stimulates hepatic and intestinal proliferation. This Bos taurus (Bovine) protein is Fibroblast growth factor 18 (FGF18).